Consider the following 252-residue polypeptide: Protein PYRAB15930 (252 aa).

It belongs to the CinA family.

The chain is Protein PYRAB15930 from Pyrococcus abyssi (strain GE5 / Orsay).